The chain runs to 350 residues: Phosphotriesterase-related protein (350 aa).

Histidine 22, histidine 24, glutamate 169, histidine 201, histidine 230, and aspartate 298 together coordinate a divalent metal cation.

The protein belongs to the metallo-dependent hydrolases superfamily. Phosphotriesterase family. A divalent metal cation serves as cofactor.

The sequence is that of Phosphotriesterase-related protein from Drosophila persimilis (Fruit fly).